Reading from the N-terminus, the 438-residue chain is Putative F-box/FBD/LRR-repeat protein At2g05300 (438 aa).

An F-box domain is found at 13 to 59 (EDRISQLPDPLLTQILNLLPTEEAVKTSVLSTRWRTLWLWVPNLELS). LRR repeat units follow at residues 135–166 (CDSL…RLKD), 167–192 (IVFH…KIDV), 235–261 (CLII…DISL), and 318–346 (YVTL…ILER). The region spanning 362–409 (SMSSVPECLLTSLEFVEFKAPICGLGPEMMLVWYFLKNSPTLKKLTLP) is the FBD domain.

The protein is Putative F-box/FBD/LRR-repeat protein At2g05300 of Arabidopsis thaliana (Mouse-ear cress).